A 478-amino-acid polypeptide reads, in one-letter code: Amino acid oxidase imqH (478 aa).

A signal peptide spans 1-22 (MPAPKSIIIVGSGVFGLSTAHA). Residues Val14, Phe15, Asp38, Asn53, Ala57, Asn58, Arg63, and Ile64 each coordinate FAD. 2 N-linked (GlcNAc...) asparagine glycosylation sites follow: Asn97 and Asn167. FAD is bound at residue Val208. Cys399 carries the post-translational modification S-8alpha-FAD cysteine. FAD contacts are provided by Phe432 and Lys433.

This sequence belongs to the MSOX/MTOX family. In terms of assembly, dimer. FAD serves as cofactor.

It participates in secondary metabolite biosynthesis. Functionally, nonribosomal peptide synthetase; part of the gene cluster that mediates the biosynthesis of imizoquins A to D, tripeptide-derived alkaloids that serve a protective role against oxidative stress that are essential for normal germination. ImqB is a canonical three-module NRPS that assembles the tripeptide backbone of the imizoquins via condensation of Trp, Tyr, and Leu-derived precursors. N-methylation by imqF and phenol oxidation by imqC, followed by cyclization via the FAD-dependent oxidase imqH carry out the three-step transformation of L-tyrosine into tetrahydroisoquinoline. Importantly, this sequence requires the presence of a free amine in the tyrosine moiety, indicating that isoquinoline formation occurs prior to peptide bond formation. The imidazolidin-4-one ring of imizoquins could form following additional oxidation of the methyl-derived bridgehead carbon by imqH. Lastly, O-methylation by imqG and leucine hydroxylation by imqE complete biosynthesis of the imizoquins. The chain is Amino acid oxidase imqH from Aspergillus flavus (strain ATCC 200026 / FGSC A1120 / IAM 13836 / NRRL 3357 / JCM 12722 / SRRC 167).